The primary structure comprises 160 residues: tRNA (cytidine(56)-2'-O)-methyltransferase (160 aa).

S-adenosyl-L-methionine is bound by residues Leu68, 94–98 (GAEKV), and 112–119 (IGNQPHSE).

Belongs to the aTrm56 family. Homodimer.

It is found in the cytoplasm. The enzyme catalyses cytidine(56) in tRNA + S-adenosyl-L-methionine = 2'-O-methylcytidine(56) in tRNA + S-adenosyl-L-homocysteine + H(+). Functionally, specifically catalyzes the AdoMet-dependent 2'-O-ribose methylation of cytidine at position 56 in tRNAs. The protein is tRNA (cytidine(56)-2'-O)-methyltransferase of Saccharolobus solfataricus (strain ATCC 35092 / DSM 1617 / JCM 11322 / P2) (Sulfolobus solfataricus).